We begin with the raw amino-acid sequence, 490 residues long: tRNA-guanine(15) transglycosylase (490 aa).

Aspartate 90 functions as the Nucleophile in the catalytic mechanism. Substrate contacts are provided by aspartate 125 and alanine 193. Residues cysteine 276, cysteine 278, and cysteine 281 each contribute to the Zn(2+) site.

It belongs to the archaeosine tRNA-ribosyltransferase family. The cofactor is Zn(2+).

It catalyses the reaction guanosine(15) in tRNA + 7-cyano-7-deazaguanine = 7-cyano-7-carbaguanosine(15) in tRNA + guanine. Its pathway is tRNA modification; archaeosine-tRNA biosynthesis. In terms of biological role, exchanges the guanine residue with 7-cyano-7-deazaguanine (preQ0) at position 15 in the dihydrouridine loop (D-loop) of archaeal tRNAs. This chain is tRNA-guanine(15) transglycosylase, found in Methanosarcina barkeri (strain Fusaro / DSM 804).